Reading from the N-terminus, the 390-residue chain is Histamine H4 receptor (390 aa).

At 1–19 (MPDTNSTINLSLSTRVTLA) the chain is on the extracellular side. N5 and N9 each carry an N-linked (GlcNAc...) asparagine glycan. A helical transmembrane segment spans residues 20–40 (FFMSLVAFAIMLGNALVILAF). Over 41–52 (VVDKNLRHRSSY) the chain is Cytoplasmic. The helical transmembrane segment at 53-73 (FFLNLAISDFFVGVISIPLYI) threads the bilayer. Over 74 to 87 (PHTLFEWDFGKEIC) the chain is Extracellular. C87 and C164 are joined by a disulfide. Residues 88–108 (VFWLTTDYLLCTASVYNIVLI) traverse the membrane as a helical segment. Residues 109 to 131 (SYDRYLSVSNAVSYRTQHTGVLK) lie on the Cytoplasmic side of the membrane. The helical transmembrane segment at 132 to 152 (IVTLMVAVWVLAFLVNGPMIL) threads the bilayer. Topologically, residues 153–172 (VSESWKDEGSECEPGFFSEW) are extracellular. Residues 173–193 (YILAITSFLEFVIPVILVAYF) traverse the membrane as a helical segment. Over 194-304 (NMNIYWSLWK…LLRARRLAKS (111 aa)) the chain is Cytoplasmic. A helical transmembrane segment spans residues 305–325 (LAILLGVFAVCWAPYSLFTIV). Topologically, residues 326–341 (LSFYSSATGPKSVWYR) are extracellular. Residues 342–362 (IAFWLQWFNSFVNPLLYPLCH) traverse the membrane as a helical segment. At 363-390 (KRFQKAFLKIFCIKKQPLPSQHSRSVSS) the chain is on the cytoplasmic side.

This sequence belongs to the G-protein coupled receptor 1 family. As to quaternary structure, interacts with TSPAN4. In terms of tissue distribution, expressed primarily in the bone marrow and eosinophils. Shows preferential distribution in cells of immunological relevance such as T-cells, dendritic cells, monocytes, mast cells, neutrophils. Also expressed in a wide variety of peripheral tissues, including the heart, kidney, liver, lung, pancreas, skeletal muscle, prostate, small intestine, spleen, testis, colon, fetal liver and lymph node.

The protein resides in the cell membrane. In terms of biological role, the H4 subclass of histamine receptors could mediate the histamine signals in peripheral tissues. Displays a significant level of constitutive activity (spontaneous activity in the absence of agonist). This chain is Histamine H4 receptor (HRH4), found in Homo sapiens (Human).